Reading from the N-terminus, the 547-residue chain is Large cysteine-rich periplasmic protein OmcB (547 aa).

The signal sequence occupies residues 1-22; it reads MNKLIRRAVTIFAVTSVASLFA. Positions 23-40 are excised as a propeptide; it reads SGVLETSMAESLSTNVIS. The segment at 45–84 is disordered; it reads KAKDNTSHKSKKARKNHSKETPVDRKEVAPVHESKATGPK. The segment covering 52–61 has biased composition (basic residues); the sequence is HKSKKARKNH. The span at 62 to 79 shows a compositional bias: basic and acidic residues; sequence SKETPVDRKEVAPVHESK.

Part of a disulfide cross-linked outer membrane complex (COMC) composed of the major outer membrane porin (MOMP), the small cysteine-rich protein (OmcA) and the large cysteine-rich periplasmic protein (OmcB).

The protein localises to the periplasm. In elementary bodies (EBs, the infectious stage, which is able to survive outside the host cell) provides the structural integrity of the outer envelope through disulfide cross-links with the small cysteine-rich protein and the major outer membrane protein. It has been described in publications as the Sarkosyl-insoluble COMC (Chlamydia outer membrane complex), and serves as the functional equivalent of peptidoglycan. In Chlamydia trachomatis serovar D (strain ATCC VR-885 / DSM 19411 / UW-3/Cx), this protein is Large cysteine-rich periplasmic protein OmcB (omcB).